A 142-amino-acid chain; its full sequence is 3-hydroxyacyl-[acyl-carrier-protein] dehydratase FabZ (142 aa).

H47 is an active-site residue.

Belongs to the thioester dehydratase family. FabZ subfamily.

The protein localises to the cytoplasm. The enzyme catalyses a (3R)-hydroxyacyl-[ACP] = a (2E)-enoyl-[ACP] + H2O. Functionally, involved in unsaturated fatty acids biosynthesis. Catalyzes the dehydration of short chain beta-hydroxyacyl-ACPs and long chain saturated and unsaturated beta-hydroxyacyl-ACPs. This chain is 3-hydroxyacyl-[acyl-carrier-protein] dehydratase FabZ, found in Thermoanaerobacter sp. (strain X514).